Reading from the N-terminus, the 245-residue chain is Serine/arginine-rich splicing factor 1B (245 aa).

The RRM 1 domain maps to 15-90 (CRIYVGNLPP…YRLRVEFPRS (76 aa)). Disordered regions lie at residues 89–116 (RSGR…PPSR) and 192–245 (KVDG…RSRT). Residues 91-106 (GRGGGRGGGGGGGVGA) are compositionally biased toward gly residues. An RRM 2 domain is found at 120-194 (YRVIVSGLPP…ETAYIRVKVD (75 aa)). Over residues 204 to 245 (SRSRSRSRSRSRSNSRSRSYSPRRSRGSPRYSPRHSRSRSRT) the composition is skewed to basic residues.

The protein belongs to the splicing factor SR family.

It is found in the cytoplasm. Its subcellular location is the nucleus speckle. Its function is as follows. May play a role in preventing exon skipping, ensuring the accuracy of splicing and regulating alternative splicing. The sequence is that of Serine/arginine-rich splicing factor 1B (srsf1b) from Danio rerio (Zebrafish).